The sequence spans 153 residues: Pheromone-binding protein Gp-9 (153 aa).

The N-terminal stretch at 1–19 (MKTFVLHIFIFALVAFASA) is a signal peptide. 3 cysteine pairs are disulfide-bonded: cysteine 37–cysteine 77, cysteine 73–cysteine 129, and cysteine 118–cysteine 138.

Belongs to the PBP/GOBP family. As to quaternary structure, homodimer.

It is found in the secreted. In terms of biological role, colony queen number, a major feature of social organization, is associated with worker genotype for Gp-9. Colonies are headed by either a single reproductive queen (monogyne form) or multiple queens (polygyne form). Differences in worker Gp-9 genotypes between social forms may cause differences in workers' abilities to recognize queens and regulate their numbers. This Solenopsis daguerrei (Workerless parasitic ant) protein is Pheromone-binding protein Gp-9.